The following is a 508-amino-acid chain: MGLPWYRVHTVVLNDPGRLLSVHIMHTALVAGWAGSMALYELAVFDPSDPVLDPMWRQGMFVIPFMTRLGITNSWGGWSITGGTVTNPGIWSYEGVAGSHIVFSGLCFLAAIWHWVYWDLEIFCDERTGKPSLDLPKIFGIHLFLSGVACFGFGVFHVTGLYGPGIWVSDPYGLTGKVQPVNPAWGVEGFDPFVPGGIASHHIAAGTLGILAGLFHLSVRPPQRLYKGLRMGNIETVLSSSIAAVFFAAFVVAGTMWYGSATTPIELFGPTRYQWDQGYFQQEIYRRVSAGLAENKSLSEAWSKIPEKLAFYDYIGNNPAKGGLFRAGSMDNGDGIAVGWLGHPIFRDKEGRELFVRRMPTFFETFPVVLVDGDGIVRADVPFRRAESKYSVEQVGVTLEFYGGELNGVSYSDPAVVKKYARRAQLGEIFELDRATLKSDGVFRSSPRGWFTFGHASFALLFFFGHIWHGARTLFRDVFAGIDPDLDAQVEFGAFQKLGDPTTRREVV.

A run of 6 helical transmembrane segments spans residues 21-36, 101-115, 140-156, 203-218, 237-252, and 457-472; these read SVHI…WAGS, IVFS…IWHW, GIHL…FGVF, IAAG…FHLS, VLSS…AFVV, and SFAL…HGAR.

It belongs to the PsbB/PsbC family. PsbB subfamily. PSII is composed of 1 copy each of membrane proteins PsbA, PsbB, PsbC, PsbD, PsbE, PsbF, PsbH, PsbI, PsbJ, PsbK, PsbL, PsbM, PsbT, PsbX, PsbY, PsbZ, Psb30/Ycf12, at least 3 peripheral proteins of the oxygen-evolving complex and a large number of cofactors. It forms dimeric complexes. Binds multiple chlorophylls. PSII binds additional chlorophylls, carotenoids and specific lipids. serves as cofactor.

The protein resides in the plastid. Its subcellular location is the chloroplast thylakoid membrane. In terms of biological role, one of the components of the core complex of photosystem II (PSII). It binds chlorophyll and helps catalyze the primary light-induced photochemical processes of PSII. PSII is a light-driven water:plastoquinone oxidoreductase, using light energy to abstract electrons from H(2)O, generating O(2) and a proton gradient subsequently used for ATP formation. This is Photosystem II CP47 reaction center protein from Jasminum nudiflorum (Winter jasmine).